We begin with the raw amino-acid sequence, 148 residues long: Hemoglobin subunit beta (148 aa).

Positions 3–148 (XWTDXERAAI…VVSALGRQYH (146 aa)) constitute a Globin domain. Heme b is bound by residues His64 and His93.

It belongs to the globin family. In terms of assembly, heterotetramer of two alpha chains and two beta chains. In terms of tissue distribution, red blood cells.

In terms of biological role, involved in oxygen transport from gills to the various peripheral tissues. The chain is Hemoglobin subunit beta (hbb) from Decapterus maruadsi (Japanese scad).